The following is a 111-amino-acid chain: Small ribosomal subunit protein bS6 (111 aa).

This sequence belongs to the bacterial ribosomal protein bS6 family.

Its function is as follows. Binds together with bS18 to 16S ribosomal RNA. This is Small ribosomal subunit protein bS6 from Francisella philomiragia subsp. philomiragia (strain ATCC 25017 / CCUG 19701 / FSC 153 / O#319-036).